A 168-amino-acid chain; its full sequence is Protein-export protein SecB (168 aa).

This sequence belongs to the SecB family. In terms of assembly, homotetramer, a dimer of dimers. One homotetramer interacts with 1 SecA dimer.

The protein localises to the cytoplasm. Its function is as follows. One of the proteins required for the normal export of preproteins out of the cell cytoplasm. It is a molecular chaperone that binds to a subset of precursor proteins, maintaining them in a translocation-competent state. It also specifically binds to its receptor SecA. This is Protein-export protein SecB from Rhizobium meliloti (strain 1021) (Ensifer meliloti).